The chain runs to 245 residues: Ribonuclease PH (245 aa).

Phosphate-binding positions include arginine 86 and glycine 124–arginine 126.

The protein belongs to the RNase PH family. In terms of assembly, homohexameric ring arranged as a trimer of dimers.

The enzyme catalyses tRNA(n+1) + phosphate = tRNA(n) + a ribonucleoside 5'-diphosphate. In terms of biological role, phosphorolytic 3'-5' exoribonuclease that plays an important role in tRNA 3'-end maturation. Removes nucleotide residues following the 3'-CCA terminus of tRNAs; can also add nucleotides to the ends of RNA molecules by using nucleoside diphosphates as substrates, but this may not be physiologically important. Probably plays a role in initiation of 16S rRNA degradation (leading to ribosome degradation) during starvation. The chain is Ribonuclease PH from Bacillus cereus (strain ATCC 10987 / NRS 248).